The following is a 205-amino-acid chain: Probable nicotinate-nucleotide adenylyltransferase (205 aa).

Belongs to the NadD family.

It carries out the reaction nicotinate beta-D-ribonucleotide + ATP + H(+) = deamido-NAD(+) + diphosphate. It functions in the pathway cofactor biosynthesis; NAD(+) biosynthesis; deamido-NAD(+) from nicotinate D-ribonucleotide: step 1/1. In terms of biological role, catalyzes the reversible adenylation of nicotinate mononucleotide (NaMN) to nicotinic acid adenine dinucleotide (NaAD). The polypeptide is Probable nicotinate-nucleotide adenylyltransferase (Arthrobacter sp. (strain FB24)).